The following is a 148-amino-acid chain: Cystatin-D (148 aa).

The signal sequence occupies residues 1-33 (MASLLSPSMPVLAAVALTLTLAVIPEASTNAEA). The Cystatin kininogen-type domain maps to 36–148 (VVLGGVEPAD…SMTNFNCYNF (113 aa)). 2 disulfides stabilise this stretch: Cys101–Cys111 and Cys125–Cys145.

This sequence belongs to the cystatin family. As to expression, in cartilage, expressed mainly in mature chondrocytes including prehypertrophic and hypertrophic cells (at protein level). Expressed exclusively in cartilage.

The protein localises to the cytoplasm. It localises to the cytosol. In terms of biological role, may play a role in the last steps of the chondrocyte differentiation pathway as an inducer of maturation. Induces chondrocyte calcification during endochondral ossification by playing a role in the transcriptional inhibition of ENPP1, a generator of pyrophosphate which inhibits calcification. Possibly impairs the binding of a transcription factor to the ENPP1 promoter. Unlike other cystatins, does not have thiol protease inhibitor activity. The protein is Cystatin-D of Mus musculus (Mouse).